Reading from the N-terminus, the 38-residue chain is Photosystem II reaction center protein L (38 aa).

The chain crosses the membrane as a helical span at residues 17–37 (SLFWGLLLIFVLAVLFSNYFF).

Belongs to the PsbL family. In terms of assembly, PSII is composed of 1 copy each of membrane proteins PsbA, PsbB, PsbC, PsbD, PsbE, PsbF, PsbH, PsbI, PsbJ, PsbK, PsbL, PsbM, PsbT, PsbX, PsbY, PsbZ, Psb30/Ycf12, at least 3 peripheral proteins of the oxygen-evolving complex and a large number of cofactors. It forms dimeric complexes.

It is found in the plastid. It localises to the chloroplast thylakoid membrane. In terms of biological role, one of the components of the core complex of photosystem II (PSII). PSII is a light-driven water:plastoquinone oxidoreductase that uses light energy to abstract electrons from H(2)O, generating O(2) and a proton gradient subsequently used for ATP formation. It consists of a core antenna complex that captures photons, and an electron transfer chain that converts photonic excitation into a charge separation. This subunit is found at the monomer-monomer interface and is required for correct PSII assembly and/or dimerization. This Chaetosphaeridium globosum (Charophycean green alga) protein is Photosystem II reaction center protein L.